The following is a 287-amino-acid chain: ATP synthase gamma chain (287 aa).

This sequence belongs to the ATPase gamma chain family. F-type ATPases have 2 components, CF(1) - the catalytic core - and CF(0) - the membrane proton channel. CF(1) has five subunits: alpha(3), beta(3), gamma(1), delta(1), epsilon(1). CF(0) has three main subunits: a, b and c.

The protein resides in the cell inner membrane. Its function is as follows. Produces ATP from ADP in the presence of a proton gradient across the membrane. The gamma chain is believed to be important in regulating ATPase activity and the flow of protons through the CF(0) complex. The sequence is that of ATP synthase gamma chain from Hahella chejuensis (strain KCTC 2396).